The chain runs to 331 residues: Probable tRNA pseudouridine synthase B (331 aa).

Residues 1–15 (MRCSQREVFVKREEP) are compositionally biased toward basic and acidic residues. A disordered region spans residues 1–27 (MRCSQREVFVKREEPTNPEWGKPPSQR). Asp-71 acts as the Nucleophile in catalysis. The PUA domain occupies 238-313 (LPKIWVRDSA…AVVRTDRVVM (76 aa)).

It belongs to the pseudouridine synthase TruB family. Type 2 subfamily.

The catalysed reaction is uridine(55) in tRNA = pseudouridine(55) in tRNA. Functionally, could be responsible for synthesis of pseudouridine from uracil-55 in the psi GC loop of transfer RNAs. This Pyrobaculum arsenaticum (strain DSM 13514 / JCM 11321 / PZ6) protein is Probable tRNA pseudouridine synthase B.